The primary structure comprises 249 residues: MVKLTADLIWKSPHFFNAIKERELDLRGNKIPVIENLGATEDQFDTIDLSDNEIVKLENFPYLNRLGTLLINNNRITRINPNLGEFLPKLHSLVLTNNRLVNLVEIDPLASIPKLQYLSLLDNNITKKANYRLYVIHKLKSLRVLDFIKIKAKERAEAASLFSSKEAEEEVKKVSREEVKKVSETAENPETPKVVAPTAEQILAIKAAIINSQTIEEIARLEQALKFGQVPAGLIIPDPATNDSAPMEE.

LRR repeat units follow at residues 20 to 41 (KERE…GATE), 43 to 64 (QFDT…PYLN), 65 to 87 (RLGT…GEFL), and 89 to 110 (KLHS…DPLA). The region spanning 123 to 161 (NNITKKANYRLYVIHKLKSLRVLDFIKIKAKERAEAASL) is the LRRCT domain.

Belongs to the U2 small nuclear ribonucleoprotein A family.

It is found in the nucleus. Its subcellular location is the nucleus speckle. Its function is as follows. This protein is associated with sn-RNP U2. It helps the A' protein to bind stem loop IV of U2 snRNA. The chain is U2 small nuclear ribonucleoprotein A' from Arabidopsis thaliana (Mouse-ear cress).